We begin with the raw amino-acid sequence, 115 residues long: NADH-ubiquinone oxidoreductase chain 3 (115 aa).

The next 3 membrane-spanning stretches (helical) occupy residues 4 to 24 (LITMTVNSALSFCLISIAFWL), 55 to 75 (FFLVGITFLLFDLEIALLLPL), and 87 to 107 (TMMVSFMFVSILALGLAYEWL).

It belongs to the complex I subunit 3 family. Core subunit of respiratory chain NADH dehydrogenase (Complex I) which is composed of 45 different subunits. Interacts with TMEM186. Interacts with TMEM242.

It is found in the mitochondrion inner membrane. It carries out the reaction a ubiquinone + NADH + 5 H(+)(in) = a ubiquinol + NAD(+) + 4 H(+)(out). Its function is as follows. Core subunit of the mitochondrial membrane respiratory chain NADH dehydrogenase (Complex I) which catalyzes electron transfer from NADH through the respiratory chain, using ubiquinone as an electron acceptor. Essential for the catalytic activity of complex I. This Notiomys edwardsii (Edwards's long-clawed mouse) protein is NADH-ubiquinone oxidoreductase chain 3.